The chain runs to 984 residues: G patch domain-containing protein TGH homolog (984 aa).

Over residues 130-144 (EHARKQASKEQKERP) the composition is skewed to basic and acidic residues. The interval 130–153 (EHARKQASKEQKERPSAIPGPIPD) is disordered. Residues 160–202 (TTSIGVKLLMKMGWRQGRSIRDAHADSLYESRREARKAFLALS) form the G-patch domain. The SURP motif repeat unit spans residues 408-450 (LIEGCAAMVARCGKHIEDFYKEKSKTNTQFNFLNEGDGCSYYA). Disordered stretches follow at residues 464 to 503 (QKPD…SSFP), 679 to 717 (TRTN…ESSS), 775 to 806 (LGLD…GISR), and 820 to 984 (ESAL…HHKR). A compositionally biased stretch (basic and acidic residues) spans 473-495 (SSDKLTAENRGKILGERPLDRST). A compositionally biased stretch (polar residues) spans 679–695 (TRTNEVESSSIAPQHTS). Over residues 697 to 709 (AGATETEAKGAAT) the composition is skewed to low complexity. Residues 814 to 859 (QEIKENESALDKEEIANASADVPSDNVEELGLKYEKQEHRAEKSRS) adopt a coiled-coil conformation. The segment covering 843 to 858 (LGLKYEKQEHRAEKSR) has biased composition (basic and acidic residues). Composition is skewed to basic residues over residues 882–892 (SRERRSRHKIR), 905–922 (HRSK…RRSR), and 934–946 (TKRK…HHRT). The segment covering 947-974 (RNPDTDSSDHEYEERHKSSSRRSSDKDR) has biased composition (basic and acidic residues). Positions 975–984 (SRRRSRHHKR) are enriched in basic residues.

It localises to the nucleus. Its function is as follows. Functions as a component of microRNA (miRNA) and small interfering RNA (siRNA) biogenesis. May assist Dicer-like (DCL) proteins to efficiently process and/or recruit the precursors of miRNAs and siRNAs. The polypeptide is G patch domain-containing protein TGH homolog (Oryza sativa subsp. japonica (Rice)).